A 300-amino-acid polypeptide reads, in one-letter code: UPF0761 membrane protein Patl_3954 (300 aa).

6 helical membrane passes run leucine 46–phenylalanine 66, methionine 103–aspartate 123, isoleucine 138–leucine 158, methionine 184–valine 204, alanine 214–phenylalanine 234, and alanine 248–leucine 268.

The protein belongs to the UPF0761 family.

The protein localises to the cell inner membrane. This is UPF0761 membrane protein Patl_3954 from Pseudoalteromonas atlantica (strain T6c / ATCC BAA-1087).